The chain runs to 1493 residues: Pleckstrin homology domain-containing family H member 2 (1493 aa).

Residues 20–175 (LESQLMKFRV…LQEVQGKKSS (156 aa)) adopt a coiled-coil conformation. Disordered regions lie at residues 202-230 (SPPQVVKSEEMSKISSKEPEFTEGKDMEE), 245-335 (NNRG…SSSI), 363-439 (LNSP…LPPP), and 613-705 (SSSP…EPLE). Residues 208-230 (KSEEMSKISSKEPEFTEGKDMEE) are compositionally biased toward basic and acidic residues. Composition is skewed to polar residues over residues 245 to 260 (NNRGQRTLHQTPCGSE) and 267 to 281 (TSFATDGGISQNSGA). Residues 374 to 388 (LSKKEQDSSSDELNK) show a composition bias toward basic and acidic residues. 3 stretches are compositionally biased toward polar residues: residues 389–409 (KFQSQRLDYSSSSSEANTPSP), 421–432 (NSLSGKGTQLVP), and 676–698 (STDTEYSQPEQKLPKTCSSSSDN). PH domains follow at residues 703–797 (PLEK…NVLR) and 811–919 (KPTM…VAAG). The MyTH4 domain occupies 955–1110 (HSKEGIISPL…PSRMEILSTL (156 aa)). Positions 1121–1451 (FSIPVHFMNG…SYINNFHQQK (331 aa)) constitute an FERM domain. Positions 1474-1493 (MMGSQPLLSSSRPTKGPTLL) are disordered.

As to quaternary structure, self-associates. Interacts with TGFB1I1. In terms of tissue distribution, kidney. Reduced expression in patients with focal segmental glomerulosclerosis.

The protein localises to the cytoplasm. The protein resides in the cytoskeleton. It is found in the cell membrane. Its subcellular location is the cell projection. It localises to the lamellipodium. In terms of biological role, in the kidney glomerulus may play a role in linking podocyte foot processes to the glomerular basement membrane. May be involved in stabilization of F-actin by attenuating its depolymerization. Can recruit TGFB1I1 from focal adhesions to podocyte lamellipodia. The chain is Pleckstrin homology domain-containing family H member 2 (PLEKHH2) from Homo sapiens (Human).